The sequence spans 85 residues: Phycobilisome 9.7 kDa linker polypeptide, phycocyanin-associated, rod (85 aa).

The CpcD-like domain occupies 16-74 (NRVFVYEVEGLRQNEQTDNNRYQIRNSSTIEIQVPYSRMNEEDRRITRLGGRIVNIRPA).

Belongs to the phycobilisome linker protein family.

It is found in the cellular thylakoid membrane. Its function is as follows. Rod linker protein, associated with phycocyanin. Linker polypeptides determine the state of aggregation and the location of the disk-shaped phycobiliprotein units within the phycobilisome and modulate their spectroscopic properties in order to mediate a directed and optimal energy transfer. This Microchaete diplosiphon (Fremyella diplosiphon) protein is Phycobilisome 9.7 kDa linker polypeptide, phycocyanin-associated, rod (cpcD2).